Here is an 840-residue protein sequence, read N- to C-terminus: V-type proton ATPase subunit a, vacuolar isoform (840 aa).

A2 carries the post-translational modification N-acetylalanine. Over 2–404 the chain is Cytoplasmic; it reads AEKEEAIFRS…DCYGIAQYRE (403 aa). A coiled-coil region spans residues 117-145; it reads LEERLIQMEDATDQIEVQKNDLEQYRFIL. The chain crosses the membrane as a helical span at residues 405-423; the sequence is INAGLPTIVTFPFMFAIMF. Over 424-425 the chain is Vacuolar; sequence GD. Residues 426–442 traverse the membrane as a helical segment; that stretch reads MGHGFLMTLAALSLVLN. Topologically, residues 443-456 are cytoplasmic; the sequence is EKKINKMKRGEIFD. Residues 457-486 form a helical membrane-spanning segment; that stretch reads MAFTGRYIILLMGVFSMYTGFLYNDIFSKT. The Vacuolar portion of the chain corresponds to 487–534; that stretch reads MTIFKSGWKWPDHWKKGESITATSVGTYPIGLDWAWHGTENALLFSNS. The helical transmembrane segment at 535-554 threads the bilayer; it reads YKMKLSILMGFIHMTYSYFF. Residues 555–572 are Cytoplasmic-facing; the sequence is SLANHLYFNSMIDIIGNF. The chain crosses the membrane as a helical span at residues 573-593; it reads IPGLLFMQGIFGYLSVCIVYK. Topologically, residues 594–636 are vacuolar; the sequence is WAVDWVKDGKPAPGLLNMLINMFLSPGTIDDELYPHQAKVQVF. A helical transmembrane segment spans residues 637-656; it reads LLLMALVCIPWLLLVKPLHF. The Cytoplasmic segment spans residues 657 to 719; it reads KFTHKKKSHE…DIMIHQVIHT (63 aa). Residues 720 to 744 traverse the membrane as a helical segment; sequence IEFCLNCVSHTASYLRLWALSLAHA. The Vacuolar segment spans residues 745–765; that stretch reads QLSSVLWTMTIQIAFGFRGFV. The chain crosses the membrane as a helical span at residues 766–804; sequence GVFMTVALFAMWFALTCAVLVLMEGTSAMLHSLRLHWVE. At 805–840 the chain is on the cytoplasmic side; the sequence is SMSKFFVGEGLPYEPFAFEYKDMEVAVASASSSASS.

It belongs to the V-ATPase 116 kDa subunit family. V-ATPase is a heteromultimeric enzyme composed of a peripheral catalytic V1 complex (components A to H) attached to an integral membrane V0 proton pore complex (components: a, c, c', c'', d, e, f and VOA1). Glycosylated.

The protein localises to the vacuole membrane. Subunit of the V0 complex of vacuolar(H+)-ATPase (V-ATPase), a multisubunit enzyme composed of a peripheral complex (V1) that hydrolyzes ATP and a membrane integral complex (V0) that translocates protons. V-ATPase is responsible for acidifying and maintaining the pH of intracellular compartments. Is present only in vacuolar V-ATPase complexes; enzymes containing this subunit have a 4-fold higher ratio of proton transport to ATP hydrolysis than complexes containing the Golgi/endosomal isoform and undergo reversible dissociation of V1 and V0 in response to glucose depletion. The polypeptide is V-type proton ATPase subunit a, vacuolar isoform (Saccharomyces cerevisiae (strain ATCC 204508 / S288c) (Baker's yeast)).